Consider the following 306-residue polypeptide: GTPase Era (306 aa).

Residues 14–181 (KSGFIGIIGR…LDELWKYLPE (168 aa)) form the Era-type G domain. The G1 stretch occupies residues 22–29 (GRPNVGKS). 22–29 (GRPNVGKS) is a GTP binding site. The tract at residues 48 to 52 (QTTRN) is G2. Residues 69–72 (DTPG) are G3. Residues 69–73 (DTPGI) and 131–134 (NKID) each bind GTP. The segment at 131–134 (NKID) is G4. The segment at 160–162 (ISA) is G5. A KH type-2 domain is found at 212-290 (THKEIPYSSA…FLELFVRVRK (79 aa)).

The protein belongs to the TRAFAC class TrmE-Era-EngA-EngB-Septin-like GTPase superfamily. Era GTPase family. As to quaternary structure, monomer.

It is found in the cytoplasm. The protein localises to the cell inner membrane. An essential GTPase that binds both GDP and GTP, with rapid nucleotide exchange. Plays a role in 16S rRNA processing and 30S ribosomal subunit biogenesis and possibly also in cell cycle regulation and energy metabolism. This Syntrophus aciditrophicus (strain SB) protein is GTPase Era.